We begin with the raw amino-acid sequence, 317 residues long: Hydroxyacyl-CoA dehydrogenase ChsB1 (317 aa).

Leu-32, Asp-51, Asp-82, Ile-83, Asn-108, Ser-168, Tyr-181, Lys-185, and Thr-215 together coordinate NAD(+). Catalysis depends on residues Ser-168, Tyr-181, and Lys-185.

Belongs to the short-chain dehydrogenases/reductases (SDR) family. In terms of assembly, homodimer, with 1 active site on each face.

It carries out the reaction (22S)-hydroxy-3-oxo-chol-4-ene-24-oyl-CoA + NAD(+) = 3,22-dioxochol-4-en-24-oyl-CoA + NADH + H(+). It participates in steroid metabolism; cholesterol degradation. Its function is as follows. A reversible dehydrogenase involved in cholesterol side-chain degradation. Catalyzes the oxidation of hydroxyl-cholesterol-CoA ester metabolic intermediate (22S)-HOCO-CoA (3-oxo-chol-4-ene-(22S)-hydroxy-24-oyl-CoA), the product of ChsH3, has no activity on (22R)-HOCO-CoA (the product of EchA19). Also acts on (3R)-hydroxyoctanoyl-CoA and 17-beta-hydroxyandrost-4-en-3-one, but not on 7-alpha-hydroxyandrost-4-en-3-one, uses NAD(+) but not NADP(+). The polypeptide is Hydroxyacyl-CoA dehydrogenase ChsB1 (Mycobacterium tuberculosis (strain ATCC 25618 / H37Rv)).